A 325-amino-acid polypeptide reads, in one-letter code: Melanocortin receptor 5 (325 aa).

At 1–37 the chain is on the extracellular side; the sequence is MNSSFHLHFLDLNLNATEGNLSGPNVKNKSSPCEDMG. N-linked (GlcNAc...) asparagine glycosylation is found at asparagine 2, asparagine 15, asparagine 20, and asparagine 28. A helical membrane pass occupies residues 38–61; sequence IAVEVFLTLGVISLLENILVIGAI. The Cytoplasmic segment spans residues 62–73; sequence VKNKNLHSPMYF. A helical membrane pass occupies residues 74–97; sequence FVCSLAVADMLVSMSSAWETITIY. Over 98–114 the chain is Extracellular; that stretch reads LLNNKHLVIADAFVRHI. The helical transmembrane segment at 115–138 threads the bilayer; sequence DNVFDSMICISVVASMCSLLAIAV. The Cytoplasmic portion of the chain corresponds to 139-155; sequence DRYVTIFYALRYHHIMT. The helical transmembrane segment at 156–179 threads the bilayer; it reads ARRSGAIIAGIWAFCTGCGIVFIL. The Extracellular segment spans residues 180-186; that stretch reads YSESTYV. Residues 187 to 211 form a helical membrane-spanning segment; that stretch reads ILCLISMFFAMLFLLVSLYIHMFLL. Residues 212 to 239 are Cytoplasmic-facing; it reads ARTHVKRIAALPGASSARQRTSMQGAVT. Residues 240-265 form a helical membrane-spanning segment; the sequence is VTMLLGVFTVCWAPFFLHLTLMLSCP. Residues 266–273 are Extracellular-facing; that stretch reads QNLYCSRF. Residues 274–297 traverse the membrane as a helical segment; that stretch reads MSHFNMYLILIMCNSVMDPLIYAF. At 298-325 the chain is on the cytoplasmic side; that stretch reads RSQEMRKTFKEIICCRGFRIACSFPRRD. 2 S-palmitoyl cysteine lipidation sites follow: cysteine 311 and cysteine 312.

It belongs to the G-protein coupled receptor 1 family. As to expression, expressed in the brain but not in the melanoma cells.

It is found in the cell membrane. Receptor for MSH (alpha, beta and gamma) and ACTH. The activity of this receptor is mediated by G proteins which activate adenylate cyclase. This receptor is a possible mediator of the immunomodulation properties of melanocortins. This chain is Melanocortin receptor 5 (MC5R), found in Homo sapiens (Human).